We begin with the raw amino-acid sequence, 258 residues long: MNTQTTPSPQFYLTAPAACPYLPHEMERKVFTHLVGPRAAEMNDILTQGGFRRSQNIAYRPACESCRACVSVRILAQEFEPTKSMKRVLAANSDVIATEFAAQPSSEQYSLFRRYLDFRHQQGGMSDMTVLDYAIMVEDTHVNTRIIEYRRREEGSGLEERPKGELLAAALTDTMSDGLSMVYSYFNPALERRSLGTFMILDHVRRTKALGLPHVYLGYWVQGSRKMDYKTRFQPQEHLTPRGWERFDPSSMPESTHD.

The protein belongs to the R-transferase family. Bpt subfamily.

It is found in the cytoplasm. It carries out the reaction N-terminal L-glutamyl-[protein] + L-leucyl-tRNA(Leu) = N-terminal L-leucyl-L-glutamyl-[protein] + tRNA(Leu) + H(+). The catalysed reaction is N-terminal L-aspartyl-[protein] + L-leucyl-tRNA(Leu) = N-terminal L-leucyl-L-aspartyl-[protein] + tRNA(Leu) + H(+). Functions in the N-end rule pathway of protein degradation where it conjugates Leu from its aminoacyl-tRNA to the N-termini of proteins containing an N-terminal aspartate or glutamate. In Rhizobium etli (strain ATCC 51251 / DSM 11541 / JCM 21823 / NBRC 15573 / CFN 42), this protein is Aspartate/glutamate leucyltransferase.